We begin with the raw amino-acid sequence, 169 residues long: Protein pid-1 (169 aa).

The segment covering 137–151 (SGSPRITPQKHTPVS) has biased composition (polar residues). The tract at residues 137-169 (SGSPRITPQKHTPVSANHKPARSIFDDIPSNIA) is disordered.

Component of the pid-1 variant of the PETISCO complex (also called the pid-3, erh-2, tofu-6, and ife-3 small RNA complex) containing at least pid-1, tofu-6, ife-3, pid-3, and erh-2, which is required for the biogenesis of a class of 21 nucleotide PIWI-interacting RNAs (piRNAs) that possess a uracil residue at the 5'-end (also called 21U-RNAs). Within the complex interacts with pid-3; the interaction is direct. Within the complex interacts with erh-2. Within the complex interacts with tofu-6. As to expression, expressed predominantly in the germline (at protein level).

Its subcellular location is the cytoplasm. The protein resides in the nucleus. It is found in the perinuclear region. Component of the pid-1 variant of the PETISCO complex which is required for the biogenesis of a class of 21 nucleotide PIWI-interacting RNAs (piRNAs) that possess a uracil residue at the 5'-end (also called 21U-RNAs). Within the complex acts as an adapter which binds to the complex via erh-2. Involved in the biogenesis of 21U-RNAs which guide the piwi protein prg-1 to its DNA targets for silencing. Plays a role in small RNA-directed transgenerational epigenetic inheritance. This is Protein pid-1 from Caenorhabditis elegans.